The primary structure comprises 426 residues: Enolase (426 aa).

Gln-163 serves as a coordination point for (2R)-2-phosphoglycerate. The Proton donor role is filled by Glu-205. Mg(2+)-binding residues include Asp-242, Glu-283, and Asp-310. (2R)-2-phosphoglycerate-binding residues include Lys-335, Arg-364, Ser-365, and Lys-386. The active-site Proton acceptor is the Lys-335.

It belongs to the enolase family. It depends on Mg(2+) as a cofactor.

It is found in the cytoplasm. It localises to the secreted. The protein resides in the cell surface. The enzyme catalyses (2R)-2-phosphoglycerate = phosphoenolpyruvate + H2O. It participates in carbohydrate degradation; glycolysis; pyruvate from D-glyceraldehyde 3-phosphate: step 4/5. Its function is as follows. Catalyzes the reversible conversion of 2-phosphoglycerate (2-PG) into phosphoenolpyruvate (PEP). It is essential for the degradation of carbohydrates via glycolysis. In Clavibacter sepedonicus (Clavibacter michiganensis subsp. sepedonicus), this protein is Enolase.